Reading from the N-terminus, the 545-residue chain is T-complex protein 1 subunit gamma (545 aa).

At M1 the chain carries N-acetylmethionine. The segment at M1–S24 is disordered. At S11 the chain carries Phosphoserine. K15 is covalently cross-linked (Glycyl lysine isopeptide (Lys-Gly) (interchain with G-Cter in SUMO2)). Position 42 (G42) interacts with ADP. Residue G42 coordinates ATP. D93 is a Mg(2+) binding site. Positions 94, 95, 96, 97, 162, and 163 each coordinate ADP. Residues G94, T95, and T96 each coordinate ATP. S170 is subject to Phosphoserine. K222 carries the post-translational modification N6-acetyllysine. S243 and S244 each carry phosphoserine. Y247 is subject to Phosphotyrosine. Glycyl lysine isopeptide (Lys-Gly) (interchain with G-Cter in SUMO2) cross-links involve residues K248 and K249. S252 bears the Phosphoserine mark. C366 and C372 are disulfide-bonded. A Glycyl lysine isopeptide (Lys-Gly) (interchain with G-Cter in SUMO2) cross-link involves residue K381. G411 is an ADP binding site. G411 serves as a coordination point for ATP. A phosphothreonine mark is found at T430 and T459. G482, E483, E497, and K502 together coordinate ADP. G482 serves as a coordination point for ATP. E497 contacts ATP. The segment at H526–E545 is disordered.

It belongs to the TCP-1 chaperonin family. Component of the chaperonin-containing T-complex (TRiC), a hexadecamer composed of two identical back-to-back stacked rings enclosing a protein folding chamber. Each ring is made up of eight different subunits: TCP1/CCT1, CCT2, CCT3, CCT4, CCT5, CCT6A/CCT6, CCT7, CCT8. Interacts with PACRG. Interacts with DNAAF4. Interacts with DLEC1. In terms of processing, the N-terminus is blocked.

It localises to the cytoplasm. It carries out the reaction ATP + H2O = ADP + phosphate + H(+). In terms of biological role, component of the chaperonin-containing T-complex (TRiC), a molecular chaperone complex that assists the folding of actin, tubulin and other proteins upon ATP hydrolysis. The TRiC complex mediates the folding of WRAP53/TCAB1, thereby regulating telomere maintenance. As part of the TRiC complex may play a role in the assembly of BBSome, a complex involved in ciliogenesis regulating transports vesicles to the cilia. This chain is T-complex protein 1 subunit gamma (Cct3), found in Mus musculus (Mouse).